The primary structure comprises 81 residues: Cytotoxin I-like T-15 (81 aa).

The signal sequence occupies residues 1 to 21 (MKTLLLTLVVVTIVCLDLGYT). Cystine bridges form between Cys24-Cys42, Cys35-Cys59, Cys63-Cys74, and Cys75-Cys80.

The protein belongs to the three-finger toxin family. Short-chain subfamily. Type IA cytotoxin sub-subfamily. Monomer in solution; Homodimer and oligomer in the presence of negatively charged lipids forming a pore with a size ranging between 20 and 30 Angstroms. As to expression, expressed by the venom gland.

It localises to the secreted. The protein localises to the target cell membrane. Shows cytolytic activity on many different cells by forming pore in lipid membranes. In vivo, increases heart rate or kills the animal by cardiac arrest. In addition, it binds to heparin with high affinity, interacts with Kv channel-interacting protein 1 (KCNIP1) in a calcium-independent manner, and binds to integrin alpha-V/beta-3 (ITGAV/ITGB3) with moderate affinity. This Naja atra (Chinese cobra) protein is Cytotoxin I-like T-15.